Reading from the N-terminus, the 268-residue chain is Chymotrypsin-C (268 aa).

Residues M1–S16 form the signal peptide. Positions C17–R29 are cleaved as a propeptide — activation peptide. Disulfide bonds link C17–C141, C59–C75, C155–C222, C186–C202, and C212–C243. A glycan (N-linked (GlcNAc...) asparagine) is linked at N25. Residues V30–Q267 form the Peptidase S1 domain. The active-site Charge relay system is the H74. N79 and N90 each carry an N-linked (GlcNAc...) asparagine glycan. D121 (charge relay system) is an active-site residue. The N-linked (GlcNAc...) asparagine glycan is linked to N182. S216 acts as the Charge relay system in catalysis.

It belongs to the peptidase S1 family. Elastase subfamily.

It carries out the reaction Preferential cleavage: Leu-|-Xaa, Tyr-|-Xaa, Phe-|-Xaa, Met-|-Xaa, Trp-|-Xaa, Gln-|-Xaa, Asn-|-Xaa.. In terms of biological role, regulates activation and degradation of trypsinogens and procarboxypeptidases by targeting specific cleavage sites within their zymogen precursors. Has chymotrypsin-type protease activity and hypocalcemic activity. Cleaves TRY4 and TRY5 and thereby inhibits their autoactivation. This is Chymotrypsin-C (Ctrc) from Mus musculus (Mouse).